A 543-amino-acid chain; its full sequence is Chaperonin GroEL 7 (543 aa).

Residues 30–33 (TLGP), lysine 51, 87–91 (DGTTT), glycine 415, and aspartate 496 contribute to the ATP site.

It belongs to the chaperonin (HSP60) family. In terms of assembly, forms a cylinder of 14 subunits composed of two heptameric rings stacked back-to-back. Interacts with the co-chaperonin GroES.

It is found in the cytoplasm. The catalysed reaction is ATP + H2O + a folded polypeptide = ADP + phosphate + an unfolded polypeptide.. In terms of biological role, together with its co-chaperonin GroES, plays an essential role in assisting protein folding. The GroEL-GroES system forms a nano-cage that allows encapsulation of the non-native substrate proteins and provides a physical environment optimized to promote and accelerate protein folding. This is Chaperonin GroEL 7 from Bradyrhizobium diazoefficiens (strain JCM 10833 / BCRC 13528 / IAM 13628 / NBRC 14792 / USDA 110).